We begin with the raw amino-acid sequence, 229 residues long: MYDISGWKHVFKLDPNKELSDEHLEMICESGTDAVIVGGSDGVTIDNVLHMLVSIRRYAVPCVLEVSNVEAITPGFDFYYIPSVLNSRKVEWVTGVHHEALKEFGDIMDWDEIFMEGYCVLNPEAKVAQLTDAKCDVTEDDVIAYARLADKLLRLPIFYLEYSGTYGDVELVKNVKAQLKQAKLYYGGGISNAEQAKEMAQHADTVVVGNIIYDDIKAALKTVKAVKGE.

Lysine 12 provides a ligand contact to sn-glycerol 1-phosphate. Positions 14 and 40 each coordinate Mg(2+). Sn-glycerol 1-phosphate contacts are provided by residues 159 to 164 (YLEYSG), glycine 189, and 209 to 210 (GN).

Belongs to the GGGP/HepGP synthase family. Group I subfamily. In terms of assembly, homodimer. Mg(2+) serves as cofactor.

The catalysed reaction is sn-glycerol 1-phosphate + all-trans-heptaprenyl diphosphate = 3-heptaprenyl-sn-glycero-1-phosphate + diphosphate. It participates in membrane lipid metabolism; glycerophospholipid metabolism. Prenyltransferase that catalyzes in vivo the transfer of the heptaprenyl moiety of heptaprenyl pyrophosphate (HepPP; 35 carbon atoms) to the C3 hydroxyl of sn-glycerol-1-phosphate (G1P), producing heptaprenylglyceryl phosphate (HepGP). This reaction is an ether-bond-formation step in the biosynthesis of archaea-type G1P-based membrane lipids found in Bacillales. The polypeptide is Heptaprenylglyceryl phosphate synthase (Bacillus cereus (strain AH187)).